Reading from the N-terminus, the 186-residue chain is CASP-like protein 4C2 (186 aa).

Residues 1–31 (MRSPQPHRSGGDTQQHFQSTVSVQKLKRFNS) are Cytoplasmic-facing. The chain crosses the membrane as a helical span at residues 32 to 52 (LILVFRFAAFCFSLASAVFML). Residues 53–71 (TNSRGSDSLHWYNFDAFRY) lie on the Extracellular side of the membrane. The chain crosses the membrane as a helical span at residues 72 to 92 (VFAANAIVAIYSLFEMAASVW). The Cytoplasmic portion of the chain corresponds to 93–103 (EISRNATLFPE). The helical transmembrane segment at 104-124 (ICQVWFDFGHDQVFAYLLLSA) threads the bilayer. The Extracellular portion of the chain corresponds to 125 to 150 (NTAGTELARTLKDTCTDNKAFCVQSD). A helical membrane pass occupies residues 151 to 171 (IAIVLGFAGFLFLGISSLFSG). Residues 172-186 (FRVVCFIINGSRFYV) lie on the Cytoplasmic side of the membrane.

This sequence belongs to the Casparian strip membrane proteins (CASP) family. As to quaternary structure, homodimer and heterodimers.

It localises to the cell membrane. This chain is CASP-like protein 4C2, found in Populus trichocarpa (Western balsam poplar).